The sequence spans 337 residues: 4-hydroxy-3-methylbut-2-enyl diphosphate reductase (337 aa).

Cys25 is a [4Fe-4S] cluster binding site. Positions 54 and 87 each coordinate (2E)-4-hydroxy-3-methylbut-2-enyl diphosphate. Dimethylallyl diphosphate is bound by residues His54 and His87. 2 residues coordinate isopentenyl diphosphate: His54 and His87. Cys109 contacts [4Fe-4S] cluster. Residue His137 coordinates (2E)-4-hydroxy-3-methylbut-2-enyl diphosphate. Position 137 (His137) interacts with dimethylallyl diphosphate. Position 137 (His137) interacts with isopentenyl diphosphate. The active-site Proton donor is the Glu139. A (2E)-4-hydroxy-3-methylbut-2-enyl diphosphate-binding site is contributed by Thr177. A [4Fe-4S] cluster-binding site is contributed by Cys207. Residues Ser235, Ser236, Asn237, and Ser280 each contribute to the (2E)-4-hydroxy-3-methylbut-2-enyl diphosphate site. Dimethylallyl diphosphate is bound by residues Ser235, Ser236, Asn237, and Ser280. Isopentenyl diphosphate is bound by residues Ser235, Ser236, Asn237, and Ser280.

The protein belongs to the IspH family. [4Fe-4S] cluster is required as a cofactor.

It catalyses the reaction isopentenyl diphosphate + 2 oxidized [2Fe-2S]-[ferredoxin] + H2O = (2E)-4-hydroxy-3-methylbut-2-enyl diphosphate + 2 reduced [2Fe-2S]-[ferredoxin] + 2 H(+). It carries out the reaction dimethylallyl diphosphate + 2 oxidized [2Fe-2S]-[ferredoxin] + H2O = (2E)-4-hydroxy-3-methylbut-2-enyl diphosphate + 2 reduced [2Fe-2S]-[ferredoxin] + 2 H(+). It participates in isoprenoid biosynthesis; dimethylallyl diphosphate biosynthesis; dimethylallyl diphosphate from (2E)-4-hydroxy-3-methylbutenyl diphosphate: step 1/1. It functions in the pathway isoprenoid biosynthesis; isopentenyl diphosphate biosynthesis via DXP pathway; isopentenyl diphosphate from 1-deoxy-D-xylulose 5-phosphate: step 6/6. Functionally, catalyzes the conversion of 1-hydroxy-2-methyl-2-(E)-butenyl 4-diphosphate (HMBPP) into a mixture of isopentenyl diphosphate (IPP) and dimethylallyl diphosphate (DMAPP). Acts in the terminal step of the DOXP/MEP pathway for isoprenoid precursor biosynthesis. The sequence is that of 4-hydroxy-3-methylbut-2-enyl diphosphate reductase from Leifsonia xyli subsp. xyli (strain CTCB07).